The primary structure comprises 406 residues: Cysteine desulfurase (406 aa).

Lys226 bears the N6-(pyridoxal phosphate)lysine mark. Residue Cys364 is the Cysteine persulfide intermediate of the active site.

The protein belongs to the class-V pyridoxal-phosphate-dependent aminotransferase family. Csd subfamily. As to quaternary structure, homodimer. Interacts with SufE and the SufBCD complex composed of SufB, SufC and SufD. The interaction with SufE is required to mediate the direct transfer of the sulfur atom from the S-sulfanylcysteine. Requires pyridoxal 5'-phosphate as cofactor.

Its subcellular location is the cytoplasm. The catalysed reaction is (sulfur carrier)-H + L-cysteine = (sulfur carrier)-SH + L-alanine. It carries out the reaction L-selenocysteine + AH2 = hydrogenselenide + L-alanine + A + H(+). It participates in cofactor biosynthesis; iron-sulfur cluster biosynthesis. Its function is as follows. Cysteine desulfurases mobilize the sulfur from L-cysteine to yield L-alanine, an essential step in sulfur metabolism for biosynthesis of a variety of sulfur-containing biomolecules. Component of the suf operon, which is activated and required under specific conditions such as oxidative stress and iron limitation. Acts as a potent selenocysteine lyase in vitro, that mobilizes selenium from L-selenocysteine. Selenocysteine lyase activity is however unsure in vivo. The protein is Cysteine desulfurase of Yersinia pseudotuberculosis serotype IB (strain PB1/+).